A 189-amino-acid polypeptide reads, in one-letter code: dCTP deaminase, dUMP-forming (189 aa).

DCTP contacts are provided by residues 101–106 (KSSLGR), D119, 127–129 (TLE), Q148, Y162, and Q174. Catalysis depends on E129, which acts as the Proton donor/acceptor. The disordered stretch occupies residues 163–189 (GSSEAGSKYQGQRGPTPSKAYLNFNRS).

This sequence belongs to the dCTP deaminase family. In terms of assembly, homotrimer.

The enzyme catalyses dCTP + 2 H2O = dUMP + NH4(+) + diphosphate. The protein operates within pyrimidine metabolism; dUMP biosynthesis; dUMP from dCTP: step 1/1. Functionally, bifunctional enzyme that catalyzes both the deamination of dCTP to dUTP and the hydrolysis of dUTP to dUMP without releasing the toxic dUTP intermediate. The protein is dCTP deaminase, dUMP-forming of Rhodococcus erythropolis (strain PR4 / NBRC 100887).